Reading from the N-terminus, the 147-residue chain is MGTTKMVSLLNHSLNVTTKDGRTFVGQLLAFDGFMNLVLSDCQEYRHIKKQNVPSNSVYEEKRMLGLVILRGEFIVSLSVQGPPPMDPSMRGSLLSGPGVARPAGRGIPLGQAPVGLAGPVRGVGYTAPPPPAGFGRGAPPPGFRPV.

Residues 1-84 (MGTTKMVSLL…IVSLSVQGPP (84 aa)) form the Sm domain. Disordered stretches follow at residues 87-106 (DPSMRGSLLSGPGVARPAGR) and 128-147 (APPPPAGFGRGAPPPGFRPV).

Belongs to the snRNP SmB/SmN family. In terms of assembly, belongs to the 40S cdc5-associated complex (or cwf complex), a spliceosome sub-complex reminiscent of a late-stage spliceosome composed of the U2, U5 and U6 snRNAs and at least brr2, cdc5, cwf2/prp3, cwf3/syf1, cwf4/syf3, cwf5/ecm2, spp42/cwf6, cwf7/spf27, cwf8, cwf9, cwf10, cwf11, cwf12, prp45/cwf13, cwf14, cwf15, cwf16, cwf17, cwf18, cwf19, cwf20, cwf21, cwf22, cwf23, cwf24, cwf25, cwf26, cyp7/cwf27, cwf28, cwf29/ist3, lea1, msl1, prp5/cwf1, prp10, prp12/sap130, prp17, prp22, sap61, sap62, sap114, sap145, slu7, smb1, smd1, smd3, smf1, smg1 and syf2.

Its subcellular location is the nucleus. The protein resides in the cytoplasm. Functionally, plays a role in pre-mRNA splicing as a core component of the spliceosomal U1, U2, U4 and U5 small nuclear ribonucleoproteins (snRNPs), the building blocks of the spliceosome. The protein is Small nuclear ribonucleoprotein-associated protein B (smb1) of Schizosaccharomyces pombe (strain 972 / ATCC 24843) (Fission yeast).